The following is a 254-amino-acid chain: Triosephosphate isomerase (254 aa).

Asparagine 10–lysine 12 provides a ligand contact to substrate. The active-site Electrophile is the histidine 99. Glutamate 169 serves as the catalytic Proton acceptor. Substrate contacts are provided by residues glycine 175, serine 215, and glycine 236–glycine 237.

Belongs to the triosephosphate isomerase family. As to quaternary structure, homodimer.

It localises to the cytoplasm. It catalyses the reaction D-glyceraldehyde 3-phosphate = dihydroxyacetone phosphate. It functions in the pathway carbohydrate biosynthesis; gluconeogenesis. The protein operates within carbohydrate degradation; glycolysis; D-glyceraldehyde 3-phosphate from glycerone phosphate: step 1/1. Its function is as follows. Involved in the gluconeogenesis. Catalyzes stereospecifically the conversion of dihydroxyacetone phosphate (DHAP) to D-glyceraldehyde-3-phosphate (G3P). This is Triosephosphate isomerase from Chlamydia felis (strain Fe/C-56) (Chlamydophila felis).